A 184-amino-acid polypeptide reads, in one-letter code: GTP cyclohydrolase 1 (184 aa).

Cys75, His78, and Cys146 together coordinate Zn(2+).

It belongs to the GTP cyclohydrolase I family. Toroid-shaped homodecamer, composed of two pentamers of five dimers.

It catalyses the reaction GTP + H2O = 7,8-dihydroneopterin 3'-triphosphate + formate + H(+). It functions in the pathway cofactor biosynthesis; 7,8-dihydroneopterin triphosphate biosynthesis; 7,8-dihydroneopterin triphosphate from GTP: step 1/1. This is GTP cyclohydrolase 1 from Chromohalobacter salexigens (strain ATCC BAA-138 / DSM 3043 / CIP 106854 / NCIMB 13768 / 1H11).